We begin with the raw amino-acid sequence, 901 residues long: HTH-type transcriptional regulator MalT (901 aa).

39–46 contacts ATP; it reads SPAGYGKT. An HTH luxR-type domain is found at 829-894; it reads ELIRTSPLTQ…DAVQHAQQLL (66 aa). A DNA-binding region (H-T-H motif) is located at residues 853–872; sequence NEQIAGELAVAATTIKTHIR.

It belongs to the MalT family. In terms of assembly, monomer in solution. Oligomerizes to an active state in the presence of the positive effectors ATP and maltotriose.

With respect to regulation, activated by ATP and maltotriose, which are both required for DNA binding. Functionally, positively regulates the transcription of the maltose regulon whose gene products are responsible for uptake and catabolism of malto-oligosaccharides. Specifically binds to the promoter region of its target genes, recognizing a short DNA motif called the MalT box. In Salmonella typhi, this protein is HTH-type transcriptional regulator MalT.